The following is a 462-amino-acid chain: Probable Xaa-Pro aminopeptidase pepP (462 aa).

4 residues coordinate Mn(2+): Asp259, Asp270, Glu393, and Glu433.

This sequence belongs to the peptidase M24B family. Mn(2+) is required as a cofactor.

It catalyses the reaction Release of any N-terminal amino acid, including proline, that is linked to proline, even from a dipeptide or tripeptide.. Catalyzes the removal of a penultimate prolyl residue from the N-termini of peptides. The protein is Probable Xaa-Pro aminopeptidase pepP (pepP) of Metarhizium robertsii (strain ARSEF 23 / ATCC MYA-3075) (Metarhizium anisopliae (strain ARSEF 23)).